Consider the following 334-residue polypeptide: L-lactate dehydrogenase A chain (334 aa).

NAD(+)-binding positions include 30–58 and Arg-100; that span reads GQVGMACAVSVLLKELADELALVDILEDK. Substrate-binding residues include Arg-107, Asn-139, and Arg-170. Residue Asn-139 coordinates NAD(+). Residue His-194 is the Proton acceptor of the active site. Residue Thr-249 coordinates substrate.

This sequence belongs to the LDH/MDH superfamily. LDH family. Homotetramer.

It localises to the cytoplasm. It carries out the reaction (S)-lactate + NAD(+) = pyruvate + NADH + H(+). The protein operates within fermentation; pyruvate fermentation to lactate; (S)-lactate from pyruvate: step 1/1. Functionally, interconverts simultaneously and stereospecifically pyruvate and lactate with concomitant interconversion of NADH and NAD(+). The sequence is that of L-lactate dehydrogenase A chain (ldha) from Xenopus laevis (African clawed frog).